A 569-amino-acid chain; its full sequence is Proline--tRNA ligase (569 aa).

This sequence belongs to the class-II aminoacyl-tRNA synthetase family. ProS type 1 subfamily. Homodimer.

Its subcellular location is the cytoplasm. It catalyses the reaction tRNA(Pro) + L-proline + ATP = L-prolyl-tRNA(Pro) + AMP + diphosphate. Catalyzes the attachment of proline to tRNA(Pro) in a two-step reaction: proline is first activated by ATP to form Pro-AMP and then transferred to the acceptor end of tRNA(Pro). As ProRS can inadvertently accommodate and process non-cognate amino acids such as alanine and cysteine, to avoid such errors it has two additional distinct editing activities against alanine. One activity is designated as 'pretransfer' editing and involves the tRNA(Pro)-independent hydrolysis of activated Ala-AMP. The other activity is designated 'posttransfer' editing and involves deacylation of mischarged Ala-tRNA(Pro). The misacylated Cys-tRNA(Pro) is not edited by ProRS. The chain is Proline--tRNA ligase from Dehalococcoides mccartyi (strain ATCC BAA-2100 / JCM 16839 / KCTC 5957 / BAV1).